The chain runs to 176 residues: ATP-dependent protease subunit HslV (176 aa).

Threonine 2 is a catalytic residue. Positions 157, 160, and 163 each coordinate Na(+).

It belongs to the peptidase T1B family. HslV subfamily. In terms of assembly, a double ring-shaped homohexamer of HslV is capped on each side by a ring-shaped HslU homohexamer. The assembly of the HslU/HslV complex is dependent on binding of ATP.

It localises to the cytoplasm. It catalyses the reaction ATP-dependent cleavage of peptide bonds with broad specificity.. Allosterically activated by HslU binding. Its function is as follows. Protease subunit of a proteasome-like degradation complex believed to be a general protein degrading machinery. This Escherichia coli O45:K1 (strain S88 / ExPEC) protein is ATP-dependent protease subunit HslV.